The chain runs to 559 residues: Formate--tetrahydrofolate ligase (559 aa).

68 to 75 contacts ATP; sequence TPAGEGKT.

It belongs to the formate--tetrahydrofolate ligase family.

It carries out the reaction (6S)-5,6,7,8-tetrahydrofolate + formate + ATP = (6R)-10-formyltetrahydrofolate + ADP + phosphate. It participates in one-carbon metabolism; tetrahydrofolate interconversion. The polypeptide is Formate--tetrahydrofolate ligase (Rhizobium etli (strain CIAT 652)).